A 517-amino-acid polypeptide reads, in one-letter code: MEELQGYLEKDRSWQQHFLYPLLFKEYIYIFAHDRGLNGSIFYESAEIFGYGSKYSSLLVKRSIIRMYQQNYLIYSVNDSNQNRFVGHNNFFYFHFFYSQMILEGFAVIVEIPFLLRLVSFLEEKKIPKSQNLNLRSIHSIFPFFEDKLSHLNYVSDILIPYPIHLKILVQILQFWIQDVPSLHLLRFFLHEYHNWNSLITPNNSIFLFSKENKRLFRFPYNFYVSECEFVLVFLRKQSSYLRLTSSGAFLERTHFYGKIEHLIVVVVRRNYFQKTLCFFKDPFMHYIRYQGKAILVSKGTHLLMKKWKCHLVNFWQYYFNSWSQPYRIHINQLSNCSFYFLGYLSSVLINLSAVRNQMLENSFLIDTVFKKFDTRVPVIPLIGSLSKAKFCTVSGHPISKPIWTDLSDCDIIDRFGRICRNLSHYHSGSSKKQSLYRIKYILRFSCAKTLARKHKSMVRAFLQRLGSGLLEEFFMEEEQVVSLIFPKLTSFSLHESHIERIWYLDIIRINDLVNYS.

This sequence belongs to the intron maturase 2 family. MatK subfamily.

Its subcellular location is the plastid. The protein resides in the chloroplast. Functionally, usually encoded in the trnK tRNA gene intron. Probably assists in splicing its own and other chloroplast group II introns. This is Maturase K from Caryota mitis (Burmese fishtail palm).